A 39-amino-acid chain; its full sequence is Large ribosomal subunit protein bL36 (39 aa).

It belongs to the bacterial ribosomal protein bL36 family.

The chain is Large ribosomal subunit protein bL36 from Limosilactobacillus reuteri (strain DSM 20016) (Lactobacillus reuteri).